We begin with the raw amino-acid sequence, 463 residues long: Probable cysteine protease RD21B (463 aa).

Positions 1 to 21 (MGFLKLSPMILLLAMIGVSYA) are cleaved as a signal peptide. Positions 22 to 137 (MDMSIISYDE…DRYQARVGDA (116 aa)) are cleaved as a propeptide — activation peptide. An N-linked (GlcNAc...) asparagine glycan is attached at N92. 5 disulfides stabilise this stretch: C159/C201, C193/C234, C292/C343, C376/C388, and C382/C403. C162 is a catalytic residue. Active-site residues include H298 and N318. A propeptide spans 354-463 (KKGQNPPNPG…FWAKSRKHIA (110 aa)) (removed in mature form). Residue N415 is glycosylated (N-linked (GlcNAc...) asparagine).

The protein belongs to the peptidase C1 family. Interacts with PRN2. Interacts with WSCP.

In terms of biological role, probable thiol protease. In Arabidopsis thaliana (Mouse-ear cress), this protein is Probable cysteine protease RD21B.